A 29-amino-acid chain; its full sequence is Cytochrome b6-f complex subunit 8 (29 aa).

A helical transmembrane segment spans residues 3-23 (IVSIGWAALMVVFTFSLSLVV).

It belongs to the PetN family. As to quaternary structure, the 4 large subunits of the cytochrome b6-f complex are cytochrome b6, subunit IV (17 kDa polypeptide, PetD), cytochrome f and the Rieske protein, while the 4 small subunits are PetG, PetL, PetM and PetN. The complex functions as a dimer.

The protein resides in the plastid. Its subcellular location is the chloroplast thylakoid membrane. Functionally, component of the cytochrome b6-f complex, which mediates electron transfer between photosystem II (PSII) and photosystem I (PSI), cyclic electron flow around PSI, and state transitions. The polypeptide is Cytochrome b6-f complex subunit 8 (Zygnema circumcarinatum (Green alga)).